Consider the following 264-residue polypeptide: 3-methyl-2-oxobutanoate hydroxymethyltransferase (264 aa).

Mg(2+) is bound by residues aspartate 45 and aspartate 84. 3-methyl-2-oxobutanoate is bound by residues 45–46, aspartate 84, and lysine 112; that span reads DS. Glutamate 114 contributes to the Mg(2+) binding site. The active-site Proton acceptor is glutamate 181.

It belongs to the PanB family. Homodecamer; pentamer of dimers. Mg(2+) is required as a cofactor.

The protein localises to the cytoplasm. The catalysed reaction is 3-methyl-2-oxobutanoate + (6R)-5,10-methylene-5,6,7,8-tetrahydrofolate + H2O = 2-dehydropantoate + (6S)-5,6,7,8-tetrahydrofolate. The protein operates within cofactor biosynthesis; (R)-pantothenate biosynthesis; (R)-pantoate from 3-methyl-2-oxobutanoate: step 1/2. Catalyzes the reversible reaction in which hydroxymethyl group from 5,10-methylenetetrahydrofolate is transferred onto alpha-ketoisovalerate to form ketopantoate. This chain is 3-methyl-2-oxobutanoate hydroxymethyltransferase, found in Shewanella frigidimarina (strain NCIMB 400).